The primary structure comprises 544 residues: CRISPR-associated endodeoxyribonuclease Cas12f2 (544 aa).

Residues Met-1 to Val-195 form a recognition domain (REC) region. Residues His-196–Val-326 form a wedge domain (WED) region. The linker stretch occupies residues Glu-327 to Gly-334. Residues Cys-335–Gln-485 form a ruvC-I region. Active-site residues include Asp-339 and Glu-430. Positions Thr-486–Asn-520 are target nucleic acid-binding (TNB). Positions 487, 490, 507, and 512 each coordinate Zn(2+). The ruvC-II stretch occupies residues Ala-521–Thr-541. Residue Asp-522 is part of the active site.

This sequence belongs to the CRISPR-associated endonuclease Cas12f family. In terms of assembly, an asymmetric homodimer. Guide RNA is probably required for dimerization. It depends on Mg(2+) as a cofactor. The cofactor is Zn(2+).

In terms of biological role, CRISPR (clustered regularly interspaced short palindromic repeat), is an adaptive immune system that provides protection against mobile genetic elements (viruses, transposable elements and conjugative plasmids). CRISPR clusters contain sequences complementary to antecedent mobile elements and target invading nucleic acids. CRISPR clusters are transcribed and processed into CRISPR RNA (crRNA), which requires a trans-encoded small RNA (tracrRNA), but not this protein (in vitro). Recognizes a short motif in the CRISPR repeat sequences (the 5' PAM or protospacer adjacent motif, TTAT in this organism) to help distinguish self versus nonself, as targets within the CRISPR locus do not have PAMs. Upon expression in E.coli of this protein, a mini CRISPR array and the probable tracrRNA, has dsDNA endonuclease activity. DNA cleavage is centered around positions 21 base pairs 3' of PAM. The mini system does not protect E.coli against transformation by foreign plasmids. This Micrarchaeota archaeon (strain CG1_02_47_40) protein is CRISPR-associated endodeoxyribonuclease Cas12f2.